The primary structure comprises 204 residues: Leucyl/phenylalanyl-tRNA--protein transferase (204 aa).

This sequence belongs to the L/F-transferase family.

The protein resides in the cytoplasm. It catalyses the reaction N-terminal L-lysyl-[protein] + L-leucyl-tRNA(Leu) = N-terminal L-leucyl-L-lysyl-[protein] + tRNA(Leu) + H(+). It carries out the reaction N-terminal L-arginyl-[protein] + L-leucyl-tRNA(Leu) = N-terminal L-leucyl-L-arginyl-[protein] + tRNA(Leu) + H(+). The catalysed reaction is L-phenylalanyl-tRNA(Phe) + an N-terminal L-alpha-aminoacyl-[protein] = an N-terminal L-phenylalanyl-L-alpha-aminoacyl-[protein] + tRNA(Phe). Functionally, functions in the N-end rule pathway of protein degradation where it conjugates Leu, Phe and, less efficiently, Met from aminoacyl-tRNAs to the N-termini of proteins containing an N-terminal arginine or lysine. The sequence is that of Leucyl/phenylalanyl-tRNA--protein transferase from Sinorhizobium medicae (strain WSM419) (Ensifer medicae).